A 602-amino-acid polypeptide reads, in one-letter code: Arginine--tRNA ligase (602 aa).

Residues 132–142 (ANPTGPLHVGH) carry the 'HIGH' region motif.

It belongs to the class-I aminoacyl-tRNA synthetase family. As to quaternary structure, monomer.

It localises to the cytoplasm. It catalyses the reaction tRNA(Arg) + L-arginine + ATP = L-arginyl-tRNA(Arg) + AMP + diphosphate. The polypeptide is Arginine--tRNA ligase (Cupriavidus metallidurans (strain ATCC 43123 / DSM 2839 / NBRC 102507 / CH34) (Ralstonia metallidurans)).